The chain runs to 637 residues: Threonine--tRNA ligase (637 aa).

Residues 1–61 (MIKISLKNGK…NKDCKVEILT (61 aa)) enclose the TGS domain. Residues 242 to 532 (DHRKLGKELD…LIEHYAGAFP (291 aa)) form a catalytic region. Zn(2+)-binding residues include cysteine 333, histidine 384, and histidine 509.

This sequence belongs to the class-II aminoacyl-tRNA synthetase family. Homodimer. The cofactor is Zn(2+).

The protein resides in the cytoplasm. The catalysed reaction is tRNA(Thr) + L-threonine + ATP = L-threonyl-tRNA(Thr) + AMP + diphosphate + H(+). Catalyzes the attachment of threonine to tRNA(Thr) in a two-step reaction: L-threonine is first activated by ATP to form Thr-AMP and then transferred to the acceptor end of tRNA(Thr). Also edits incorrectly charged L-seryl-tRNA(Thr). This Clostridium kluyveri (strain NBRC 12016) protein is Threonine--tRNA ligase.